A 485-amino-acid chain; its full sequence is MGMNRVLVSQAAGGLAEYLKGYDKEPSIVIGYDGRKNSDVFARDTAEIMAGAGVKAYLLPRKLPTPVLAYAIQYFDTTAGVMVTASHNPPEDNGYKVYLGKANGGGQIVSPADKDIAALIDKVAAGNIQDLPRSDNYVVLNDEVVDAYITKTASLAKEPACDINYVYTAMHGVGYEVLSKTLAKAGLPQPHVVADQVWPDGTFPTVNFPNPEEKGALDLAIKVAKEKNAEFIIANDPDADRLAVAVPDAQGNWKSLHGNVVGCFLGWYLAKQYQGKQGTLACSLVSSPALAEIAKKYSFQSEETLTGFKYIGKVSGLLFGFEEALGYLVDPDKVRDKDGISAAIVFLDLVRNLKKQGKTLADYADEFTKEFGAYVSGQISIRVSDLSEIGKLMTALRNNPPAEIAGVKVAQFIDHIKTDRQSDILVFNLENGGRLIARPSGTEPKIKFYLDARGKDPKDADRVLAEFDEGVRHILRQDAYGKQDC.

Catalysis depends on Ser-86, which acts as the Phosphoserine intermediate. Residues Ser-86, Asp-236, Asp-238, and Asp-240 each coordinate Mg(2+).

It belongs to the phosphohexose mutase family. Mg(2+) serves as cofactor.

It carries out the reaction alpha-D-mannose 1-phosphate = D-mannose 6-phosphate. The sequence is that of Probable phosphomannomutase from Haemophilus influenzae (strain ATCC 51907 / DSM 11121 / KW20 / Rd).